The chain runs to 107 residues: Putative double-stranded DNA mimic protein CGSHiGG_01135 (107 aa).

It belongs to the putative dsDNA mimic protein family.

May act as a double-stranded DNA (dsDNA) mimic. Probably regulates the activity of a dsDNA-binding protein. The sequence is that of Putative double-stranded DNA mimic protein CGSHiGG_01135 from Haemophilus influenzae (strain PittGG).